A 248-amino-acid chain; its full sequence is MNVVIVIPARLSSNRLKEKMLADLEGAPLIVRTWQQAMKSRLANRVVVATDSERIFAVLRDAGAEVVMTSPDLTCGTDRIAEAAEQVGGDVFVNLQGDEPLIDPATIDLAIAPFFEDGPMPDCTTLVFPLKPDERHIIDDPHVVKAVLDAKGNALYFSRCPIPYRRETLPDTRYYRHIGLYAFRADVLKAFVALPPSMLERTESLEQLRLLENGYRIRCIETTTDTPGVNTEEELEEVRRLFRERFGS.

This sequence belongs to the KdsB family.

It localises to the cytoplasm. It catalyses the reaction 3-deoxy-alpha-D-manno-oct-2-ulosonate + CTP = CMP-3-deoxy-beta-D-manno-octulosonate + diphosphate. Its pathway is nucleotide-sugar biosynthesis; CMP-3-deoxy-D-manno-octulosonate biosynthesis; CMP-3-deoxy-D-manno-octulosonate from 3-deoxy-D-manno-octulosonate and CTP: step 1/1. It participates in bacterial outer membrane biogenesis; lipopolysaccharide biosynthesis. In terms of biological role, activates KDO (a required 8-carbon sugar) for incorporation into bacterial lipopolysaccharide in Gram-negative bacteria. The protein is 3-deoxy-manno-octulosonate cytidylyltransferase of Chlorobaculum parvum (strain DSM 263 / NCIMB 8327) (Chlorobium vibrioforme subsp. thiosulfatophilum).